The following is a 567-amino-acid chain: uncharacterized protein (567 aa).

Residues 1 to 26 (MPSEKATTRHLPGAVETLSPRTGRRP) form a disordered region. The next 6 membrane-spanning stretches (helical) occupy residues 57–77 (AILV…TVAF), 90–110 (VSFG…TYWL), 142–162 (VALA…IIYG), 173–193 (LFSM…LTEF), 221–241 (MLVW…TAIF), and 257–277 (VLIL…ILAW). Residues 277–329 (WLTATPVRVVREALNRVEQGDLSGDLVVFDGTELGELQRGFNRMVEGLRERER) form the HAMP domain. Residues 361–485 (AVVFVDIVGS…EPVNEAARLC (125 aa)) enclose the Guanylate cyclase domain.

The protein belongs to the adenylyl cyclase class-3 family.

The protein resides in the cell membrane. This is an uncharacterized protein from Mycobacterium bovis (strain ATCC BAA-935 / AF2122/97).